We begin with the raw amino-acid sequence, 434 residues long: Hydrogenobyrinate a,c-diamide synthase (434 aa).

Residues 243–434 (RIAVARDIAF…MHLIDVAGAA (192 aa)) form the GATase cobBQ-type domain. The Nucleophile role is filled by cysteine 326.

This sequence belongs to the CobB/CbiA family. In terms of assembly, homodimer. The cofactor is Mg(2+).

It carries out the reaction hydrogenobyrinate + 2 L-glutamine + 2 ATP + 2 H2O = hydrogenobyrinate a,c-diamide + 2 L-glutamate + 2 ADP + 2 phosphate + 2 H(+). It participates in cofactor biosynthesis; adenosylcobalamin biosynthesis; cob(II)yrinate a,c-diamide from precorrin-2 (aerobic route): step 9/10. Functionally, catalyzes the ATP-dependent amidation of the two carboxylate groups at positions a and c of hydrogenobyrinate, using either L-glutamine or ammonia as the nitrogen source. To a much lesser extent, can also use cobyrinate as substrate in vitro, but the physiological substrate is indeed hydrogenobyrinate, as part of the aerobic pathway for cobalamin biosynthesis. This Sinorhizobium sp protein is Hydrogenobyrinate a,c-diamide synthase.